The sequence spans 476 residues: Aspartyl/glutamyl-tRNA(Asn/Gln) amidotransferase subunit B (476 aa).

It belongs to the GatB/GatE family. GatB subfamily. Heterotrimer of A, B and C subunits.

The enzyme catalyses L-glutamyl-tRNA(Gln) + L-glutamine + ATP + H2O = L-glutaminyl-tRNA(Gln) + L-glutamate + ADP + phosphate + H(+). The catalysed reaction is L-aspartyl-tRNA(Asn) + L-glutamine + ATP + H2O = L-asparaginyl-tRNA(Asn) + L-glutamate + ADP + phosphate + 2 H(+). Its function is as follows. Allows the formation of correctly charged Asn-tRNA(Asn) or Gln-tRNA(Gln) through the transamidation of misacylated Asp-tRNA(Asn) or Glu-tRNA(Gln) in organisms which lack either or both of asparaginyl-tRNA or glutaminyl-tRNA synthetases. The reaction takes place in the presence of glutamine and ATP through an activated phospho-Asp-tRNA(Asn) or phospho-Glu-tRNA(Gln). This is Aspartyl/glutamyl-tRNA(Asn/Gln) amidotransferase subunit B from Clostridium botulinum (strain Eklund 17B / Type B).